A 530-amino-acid chain; its full sequence is MPPLLLLSALIFLVNVLGGAPGHNPNRRAKMISIHSLSELERLKLQEAAYHELVARQFLSEFKPERALPTDRSNTFEKWFLILRGQERAVSLKTFGIRLEEVLVNELTRRKQVELRATMQMQEAAGPATSGRRRGNAVQRMFGRIRRIFSGRRDEPFLPREFTRRGRRGAVSADSLAELEGGALLLQTLQLSRISFPIGQRLLGSKRKMSLNPIAKQIPHVVEACCSFIEKHGLSTVGIFTLEYSEKRVRKLREEFDQGLDVVLDDSQNVHDVAALLKEFFRDMKDSLLPDDLYMSFLQTATLKPQDQLSALQLLVYLMPPCHSDTLERLLKVLHKVAENCEDSIGIDGQLVSGNRMTSTNLALVFGSALLKKGASAKRESRKTRLGIDHYVASVSVVRAMIDNWDVLFQVPPHIQKQVAKRVWKSSPEALDFIRRRNLRKIQSERIKMEEDALLSDPVETSAEARAAILGQSKPFDEGSSEEPAVPPGTARSHDDEEGAGNPLILEQDRPLLRVPREKEAKTGIGYFFP.

The N-terminal stretch at Met-1–Gly-19 is a signal peptide. One can recognise a Rho-GAP domain in the interval Met-209–Phe-409. Positions Gly-471 to Leu-512 are disordered.

In terms of assembly, may interacts (via the Rho-GAP domain) with the active form of RAC1.

In terms of biological role, GTPase activator for the Rho-type GTPases by converting them to an inactive GDP-bound state. The sequence is that of Rho GTPase-activating protein 36 (ARHGAP36) from Bos taurus (Bovine).